Consider the following 67-residue polypeptide: Penaeidin-4d (67 aa).

A signal peptide spans 1–19 (MRLLVCLVFLASFAMVCQG). 3 disulfides stabilise this stretch: C42-C56, C45-C63, and C57-C64. L66 carries the leucine amide modification.

This sequence belongs to the penaeidin family.

The protein resides in the cytoplasmic granule. In terms of biological role, antibacterial and antifungal activity. Presents chitin-binding activity. This chain is Penaeidin-4d, found in Penaeus setiferus (Atlantic white shrimp).